A 190-amino-acid chain; its full sequence is MIICVVGMPGSGKGQIVRIFGKYGIPHVSMGDIVREEADRRGVPRTPEGMNSVSIQLRQELGDNAVAKLAIPKVRELLKTHEAVIIEGVRSLDEIQAFKDAFPEEKVIIIAVHSSPQKRFERLSKRGRSDDPKSWSEFEARDWKELKFGLGNVIALADYLIVNESHLTQYRRKIERLAERLGIKKKYFTF.

7 to 14 (GMPGSGKG) is an ATP binding site.

The protein belongs to the UPF0200 family.

This chain is UPF0200 protein TSIB_0920, found in Thermococcus sibiricus (strain DSM 12597 / MM 739).